A 304-amino-acid polypeptide reads, in one-letter code: UDP-3-O-acyl-N-acetylglucosamine deacetylase (304 aa).

Zn(2+)-binding residues include His-78, His-237, and Asp-241. His-264 functions as the Proton donor in the catalytic mechanism.

It belongs to the LpxC family. The cofactor is Zn(2+).

The enzyme catalyses a UDP-3-O-[(3R)-3-hydroxyacyl]-N-acetyl-alpha-D-glucosamine + H2O = a UDP-3-O-[(3R)-3-hydroxyacyl]-alpha-D-glucosamine + acetate. It participates in glycolipid biosynthesis; lipid IV(A) biosynthesis; lipid IV(A) from (3R)-3-hydroxytetradecanoyl-[acyl-carrier-protein] and UDP-N-acetyl-alpha-D-glucosamine: step 2/6. In terms of biological role, catalyzes the hydrolysis of UDP-3-O-myristoyl-N-acetylglucosamine to form UDP-3-O-myristoylglucosamine and acetate, the committed step in lipid A biosynthesis. This chain is UDP-3-O-acyl-N-acetylglucosamine deacetylase, found in Xylella fastidiosa (strain 9a5c).